A 317-amino-acid polypeptide reads, in one-letter code: DNA-directed RNA polymerase subunit alpha (317 aa).

The segment at 1–234 (MKQFVRPEFI…AHLEFFIDLN (234 aa)) is alpha N-terminal domain (alpha-NTD). The interval 250 to 317 (DKELDRTVEE…ASLGLAFRQS (68 aa)) is alpha C-terminal domain (alpha-CTD).

It belongs to the RNA polymerase alpha chain family. As to quaternary structure, homodimer. The RNAP catalytic core consists of 2 alpha, 1 beta, 1 beta' and 1 omega subunit. When a sigma factor is associated with the core the holoenzyme is formed, which can initiate transcription.

It carries out the reaction RNA(n) + a ribonucleoside 5'-triphosphate = RNA(n+1) + diphosphate. Functionally, DNA-dependent RNA polymerase catalyzes the transcription of DNA into RNA using the four ribonucleoside triphosphates as substrates. The chain is DNA-directed RNA polymerase subunit alpha from Mycoplasma mycoides subsp. mycoides SC (strain CCUG 32753 / NCTC 10114 / PG1).